Here is a 300-residue protein sequence, read N- to C-terminus: Ribonuclease Z (300 aa).

Residues His-63, His-65, Asp-67, His-68, His-140, Asp-207, and His-265 each coordinate Zn(2+). Catalysis depends on Asp-67, which acts as the Proton acceptor.

Belongs to the RNase Z family. Homodimer. The cofactor is Zn(2+).

It carries out the reaction Endonucleolytic cleavage of RNA, removing extra 3' nucleotides from tRNA precursor, generating 3' termini of tRNAs. A 3'-hydroxy group is left at the tRNA terminus and a 5'-phosphoryl group is left at the trailer molecule.. Zinc phosphodiesterase, which displays some tRNA 3'-processing endonuclease activity. Probably involved in tRNA maturation, by removing a 3'-trailer from precursor tRNA. The sequence is that of Ribonuclease Z from Ignicoccus hospitalis (strain KIN4/I / DSM 18386 / JCM 14125).